The following is a 484-amino-acid chain: MAKITSNTVSQLLSAVGGSSNVSKCGNCMTRLRLSLANNGLADQSVIKKIPGVMGVVESDEQFQIILGPGKAQQAAEMMNQLIDSLTSGDSEEPDMPQQDLSAVAAEQKKQMKSKQTSAVQRFLSKFATIFTPLIPGFIAAGLLLGFATLLEQMFVLDQTPSQFMLDLIAYMKVFGKGLFAFLSILIGYNAQQAFGGSGVNGAILASLFVLGYNPEATSGIYSGMNEFFGFAIDPRGNIIGVLLAAIIGAQVERKVRQYMPDDLDMILTSVITLLIMGAVTFLIIMPIGGELFKGMSWLFLNLNDNPLGAAILAGLFLISVVFGIHQGFVPVYFALMEAQGFNSLFPILAMAGGGQVGASMALYFKAKKDALLRTQVKGAIIPGLLGIGEPLIYGVTLPRVKPFVTACIGGAAGGFFIGLVSYLGLPVGLNTVFGPSGIVAIPLMTSENGIFPGMMVFVAGLLISYIVGFLATYFFGCKDVDLS.

Residues 1 to 89 (MAKITSNTVS…NQLIDSLTSG (89 aa)) form the PTS EIIB type-1 domain. Residue cysteine 28 is the Phosphocysteine intermediate; for EIIB activity of the active site. The PTS EIIC type-1 domain occupies 125–484 (SKFATIFTPL…FFGCKDVDLS (360 aa)). A run of 10 helical transmembrane segments spans residues 127–147 (FATIFTPLIPGFIAAGLLLGF), 168–188 (LIAYMKVFGKGLFAFLSILIG), 194–214 (AFGGSGVNGAILASLFVLGYN), 228–248 (FFGFAIDPRGNIIGVLLAAII), 266–286 (MILTSVITLLIMGAVTFLIIM), 310–330 (AAILAGLFLISVVFGIHQGFV), 345–365 (LFPILAMAGGGQVGASMALYF), 379–399 (GAIIPGLLGIGEPLIYGVTLP), 409–429 (IGGAAGGFFIGLVSYLGLPVG), and 451–471 (IFPGMMVFVAGLLISYIVGFL).

Its subcellular location is the cell inner membrane. The catalysed reaction is N-acetyl-beta-D-muramate(out) + N(pros)-phospho-L-histidyl-[protein] = N-acetyl-beta-D-muramate 6-phosphate(in) + L-histidyl-[protein]. Its function is as follows. The phosphoenolpyruvate-dependent sugar phosphotransferase system (sugar PTS), a major carbohydrate active transport system, catalyzes the phosphorylation of incoming sugar substrates concomitantly with their translocation across the cell membrane. This system is involved in N-acetylmuramic acid (MurNAc) transport, yielding cytoplasmic MurNAc-6-P. Is also able to take up anhydro-N-acetylmuramic acid (anhMurNAc), but cannot phosphorylate the carbon 6, probably because of the 1,6-anhydro ring. The protein is PTS system N-acetylmuramic acid-specific EIIBC component (murP) of Vibrio parahaemolyticus serotype O3:K6 (strain RIMD 2210633).